The following is a 137-amino-acid chain: Large ribosomal subunit protein uL16 (137 aa).

Belongs to the universal ribosomal protein uL16 family. Part of the 50S ribosomal subunit.

Binds 23S rRNA and is also seen to make contacts with the A and possibly P site tRNAs. This chain is Large ribosomal subunit protein uL16, found in Rhodopseudomonas palustris (strain ATCC BAA-98 / CGA009).